The primary structure comprises 206 residues: Small ribosomal subunit protein uS2 (206 aa).

It belongs to the universal ribosomal protein uS2 family.

The chain is Small ribosomal subunit protein uS2 from Pyrobaculum neutrophilum (strain DSM 2338 / JCM 9278 / NBRC 100436 / V24Sta) (Thermoproteus neutrophilus).